We begin with the raw amino-acid sequence, 443 residues long: Tol-Pal system protein TolB (443 aa).

The signal sequence occupies residues 1-33 (MKIGIINTKIRTVFSAFACMIAASLVCTMPARA).

Belongs to the TolB family. The Tol-Pal system is composed of five core proteins: the inner membrane proteins TolA, TolQ and TolR, the periplasmic protein TolB and the outer membrane protein Pal. They form a network linking the inner and outer membranes and the peptidoglycan layer.

Its subcellular location is the periplasm. In terms of biological role, part of the Tol-Pal system, which plays a role in outer membrane invagination during cell division and is important for maintaining outer membrane integrity. The chain is Tol-Pal system protein TolB from Brucella canis (strain ATCC 23365 / NCTC 10854 / RM-666).